The following is a 257-amino-acid chain: UPF0259 membrane protein WIGBR3650 (257 aa).

6 consecutive transmembrane segments (helical) span residues 23–43, 89–109, 122–142, 148–168, 190–210, and 223–243; these read IIFF…IFLP, LSSL…INTI, IILS…ISFL, ALML…PILI, IKTV…ILVI, and VKIF…IYMY.

It belongs to the UPF0259 family.

The protein localises to the cell membrane. The chain is UPF0259 membrane protein WIGBR3650 from Wigglesworthia glossinidia brevipalpis.